The primary structure comprises 207 residues: Ribosomal RNA large subunit methyltransferase E (207 aa).

Gly60, Trp62, Asp80, Asp96, and Asp121 together coordinate S-adenosyl-L-methionine. The active-site Proton acceptor is Lys161.

Belongs to the class I-like SAM-binding methyltransferase superfamily. RNA methyltransferase RlmE family.

The protein localises to the cytoplasm. It catalyses the reaction uridine(2552) in 23S rRNA + S-adenosyl-L-methionine = 2'-O-methyluridine(2552) in 23S rRNA + S-adenosyl-L-homocysteine + H(+). In terms of biological role, specifically methylates the uridine in position 2552 of 23S rRNA at the 2'-O position of the ribose in the fully assembled 50S ribosomal subunit. This is Ribosomal RNA large subunit methyltransferase E from Thioalkalivibrio sulfidiphilus (strain HL-EbGR7).